A 129-amino-acid chain; its full sequence is Ig lambda-1 chain V region S43 (129 aa).

Positions 1–19 (MAWISLILSLLALSSGAIS) are cleaved as a signal peptide. Q20 carries the pyrrolidone carboxylic acid modification. Residues 20 to 125 (QAVVTQESAL…HWVFGGGTKL (106 aa)) form the Ig-like domain.

The sequence is that of Ig lambda-1 chain V region S43 from Mus musculus (Mouse).